The following is an 821-amino-acid chain: Leucine--tRNA ligase (821 aa).

Positions 42–52 (PYPSGKLHMGH) match the 'HIGH' region motif. A 'KMSKS' region motif is present at residues 583–587 (KMSKS). Residue Lys586 participates in ATP binding.

This sequence belongs to the class-I aminoacyl-tRNA synthetase family.

Its subcellular location is the cytoplasm. The enzyme catalyses tRNA(Leu) + L-leucine + ATP = L-leucyl-tRNA(Leu) + AMP + diphosphate. This Carboxydothermus hydrogenoformans (strain ATCC BAA-161 / DSM 6008 / Z-2901) protein is Leucine--tRNA ligase.